The sequence spans 104 residues: Ycf49-like protein (104 aa).

3 helical membrane passes run 6–26 (IPTW…IALV), 41–61 (LAWG…WHFF), and 73–93 (LQAL…WWIY).

This sequence belongs to the ycf49 family.

It localises to the cell membrane. The sequence is that of Ycf49-like protein from Synechocystis sp. (strain ATCC 27184 / PCC 6803 / Kazusa).